The primary structure comprises 842 residues: Taste receptor type 1 member 1 (842 aa).

A signal peptide spans 1–19 (MLFWAAHLLLSLQLAVAYC). At 20-568 (WAFSCQRTES…EFLGWHEPIS (549 aa)) the chain is on the extracellular side. N-linked (GlcNAc...) asparagine glycans are attached at residues Asn-88, Asn-89, Asn-96, Asn-136, Asn-292, Asn-480, and Asn-530. The chain crosses the membrane as a helical span at residues 569-589 (LVLLAANTLLLLLLIGTAGLF). Residues 590 to 604 (AWRLHTPVVRSAGGR) are Cytoplasmic-facing. Residues 605 to 625 (LCFLMLGSLVAGSCSLYSFFG) traverse the membrane as a helical segment. Residues 626 to 640 (KPTVPACLLRQPLFS) lie on the Extracellular side of the membrane. A helical transmembrane segment spans residues 641–661 (LGFAIFLSCLTIRSFQLVIIF). Residues 662-681 (KFSTKVPTFYHTWAQNHGAG) lie on the Cytoplasmic side of the membrane. The chain crosses the membrane as a helical span at residues 682 to 702 (IFVIVSSTVHLFLCLTWLAMW). Over 703–725 (TPRPTREYQRFPHLVILECTEVN) the chain is Extracellular. The chain crosses the membrane as a helical span at residues 726-746 (SVGFLVAFAHNILLSISTFVC). Residues 747-762 (SYLGKELPENYNEAKC) are Cytoplasmic-facing. Residues 763-783 (VTFSLLLHFVSWIAFFTMSSI) traverse the membrane as a helical segment. At 784 to 789 (YQGSYL) the chain is on the extracellular side. The chain crosses the membrane as a helical span at residues 790–810 (PAVNVLAGLATLSGGFSGYFL). The Cytoplasmic portion of the chain corresponds to 811–842 (PKCYVILCRPELNNTEHFQASIQDYTRRCGTT).

It belongs to the G-protein coupled receptor 3 family. TAS1R subfamily. In terms of assembly, forms heterodimers with TAS1R3. In terms of tissue distribution, expressed strongly only in fungiform papillae.

It localises to the cell membrane. Putative taste receptor. TAS1R1/TAS1R3 responds to the umami taste stimulus (the taste of monosodium glutamate) and also to most of the 20 standard L-amino acids, but not to their D-enantiomers or other compounds. Sequence differences within and between species can significantly influence the selectivity and specificity of taste responses. The sequence is that of Taste receptor type 1 member 1 (Tas1r1) from Mus musculus (Mouse).